Here is a 267-residue protein sequence, read N- to C-terminus: Mannose-specific lectin 1 (267 aa).

Positions methionine 1 to alanine 24 are cleaved as a signal peptide. Bulb-type lectin domains lie at asparagine 26 to arginine 136 and arginine 150 to arginine 260. Cystine bridges form between cysteine 54-cysteine 76 and cysteine 178-cysteine 203.

In terms of assembly, heterotetramer of 2 domain 1 and 2 domain 2 chains arranged as a dimer of domain 1/domain 2 heterodimers.

In terms of biological role, mannose-specific lectin. Has weak agglutinating activity towards trypsin-treated erythrocytes from rabbit but not from human. This chain is Mannose-specific lectin 1, found in Crocus vernus (Dutch crocus).